Reading from the N-terminus, the 842-residue chain is Leucine--tRNA ligase (842 aa).

Residues 44-55 carry the 'HIGH' region motif; the sequence is PYPSANGLHVGH. Positions 619-623 match the 'KMSKS' region motif; sequence KMSKS. Lys622 is a binding site for ATP.

It belongs to the class-I aminoacyl-tRNA synthetase family.

It localises to the cytoplasm. It catalyses the reaction tRNA(Leu) + L-leucine + ATP = L-leucyl-tRNA(Leu) + AMP + diphosphate. The polypeptide is Leucine--tRNA ligase (Borrelia recurrentis (strain A1)).